The sequence spans 370 residues: 4-hydroxy-3-methylbut-2-en-1-yl diphosphate synthase (flavodoxin) (370 aa).

Residues Cys268, Cys271, Cys303, and Glu310 each contribute to the [4Fe-4S] cluster site.

The protein belongs to the IspG family. [4Fe-4S] cluster is required as a cofactor.

It carries out the reaction (2E)-4-hydroxy-3-methylbut-2-enyl diphosphate + oxidized [flavodoxin] + H2O + 2 H(+) = 2-C-methyl-D-erythritol 2,4-cyclic diphosphate + reduced [flavodoxin]. The protein operates within isoprenoid biosynthesis; isopentenyl diphosphate biosynthesis via DXP pathway; isopentenyl diphosphate from 1-deoxy-D-xylulose 5-phosphate: step 5/6. Functionally, converts 2C-methyl-D-erythritol 2,4-cyclodiphosphate (ME-2,4cPP) into 1-hydroxy-2-methyl-2-(E)-butenyl 4-diphosphate. This chain is 4-hydroxy-3-methylbut-2-en-1-yl diphosphate synthase (flavodoxin), found in Bacillus licheniformis (strain ATCC 14580 / DSM 13 / JCM 2505 / CCUG 7422 / NBRC 12200 / NCIMB 9375 / NCTC 10341 / NRRL NRS-1264 / Gibson 46).